The following is a 393-amino-acid chain: NAD(P)H-quinone oxidoreductase subunit H, chloroplastic (393 aa).

This sequence belongs to the complex I 49 kDa subunit family. In terms of assembly, NDH is composed of at least 16 different subunits, 5 of which are encoded in the nucleus.

It localises to the plastid. It is found in the chloroplast thylakoid membrane. It catalyses the reaction a plastoquinone + NADH + (n+1) H(+)(in) = a plastoquinol + NAD(+) + n H(+)(out). The catalysed reaction is a plastoquinone + NADPH + (n+1) H(+)(in) = a plastoquinol + NADP(+) + n H(+)(out). In terms of biological role, NDH shuttles electrons from NAD(P)H:plastoquinone, via FMN and iron-sulfur (Fe-S) centers, to quinones in the photosynthetic chain and possibly in a chloroplast respiratory chain. The immediate electron acceptor for the enzyme in this species is believed to be plastoquinone. Couples the redox reaction to proton translocation, and thus conserves the redox energy in a proton gradient. The sequence is that of NAD(P)H-quinone oxidoreductase subunit H, chloroplastic from Olimarabidopsis pumila (Dwarf rocket).